A 558-amino-acid polypeptide reads, in one-letter code: Asparagine--tRNA ligase, cytoplasmic (558 aa).

Residue serine 71 is modified to Phosphoserine. A disordered region spans residues 79–101 (MWHREQMKSESREKKEAEDSLRR). Positions 81–101 (HREQMKSESREKKEAEDSLRR) are enriched in basic and acidic residues. Residues lysine 254 and lysine 500 each carry the N6-acetyllysine modification.

This sequence belongs to the class-II aminoacyl-tRNA synthetase family. As to quaternary structure, homodimer.

It is found in the cytoplasm. It carries out the reaction tRNA(Asn) + L-asparagine + ATP = L-asparaginyl-tRNA(Asn) + AMP + diphosphate + H(+). Functionally, catalyzes the attachment of asparagine to tRNA(Asn) in a two-step reaction: asparagine is first activated by ATP to form Asn-AMP and then transferred to the acceptor end of tRNA(Asn). In addition to its essential role in protein synthesis, acts as a signaling molecule that induced migration of CCR3-expressing cells. Has an essential role in the development of the cerebral cortex, being required for proper proliferation of radial glial cells. The chain is Asparagine--tRNA ligase, cytoplasmic from Macaca fascicularis (Crab-eating macaque).